A 306-amino-acid polypeptide reads, in one-letter code: Ribonuclease H2 subunit B (306 aa).

The interval 232–285 (LPDLSSPTPEPPVKKRRVSDAPVEADEDYTKYNSDNKSRKSNSKMTAAQKSLAK) is disordered. The segment covering 259 to 269 (DYTKYNSDNKS) has biased composition (basic and acidic residues).

This sequence belongs to the RNase H2 subunit B family. As to quaternary structure, the RNase H2 complex is a heterotrimer composed of the catalytic subunit RNASEH2A and the non-catalytic subunits RNASEH2B and RNASEH2C.

The protein localises to the nucleus. Non catalytic subunit of RNase H2, an endonuclease that specifically degrades the RNA of RNA:DNA hybrids. Participates in DNA replication, possibly by mediating the removal of lagging-strand Okazaki fragment RNA primers during DNA replication. Mediates the excision of single ribonucleotides from DNA:RNA duplexes. This is Ribonuclease H2 subunit B (rnaseh2b) from Xenopus laevis (African clawed frog).